A 607-amino-acid chain; its full sequence is Large ribosomal subunit assembly factor BipA (607 aa).

The tr-type G domain maps to 3-198; sequence HSIRNIAIIA…SIIKYAPAPN (196 aa). GTP-binding positions include 15-20 and 128-131; these read DHGKTT and NKID.

This sequence belongs to the TRAFAC class translation factor GTPase superfamily. Classic translation factor GTPase family. BipA subfamily. In terms of assembly, monomer.

It is found in the cytoplasm. The enzyme catalyses GTP + H2O = GDP + phosphate + H(+). Functionally, a 50S ribosomal subunit assembly protein with GTPase activity, required for 50S subunit assembly at low temperatures, may also play a role in translation. Binds GTP and analogs. Binds the 70S ribosome between the 30S and 50S subunits, in a similar position as ribosome-bound EF-G; it contacts a number of ribosomal proteins, both rRNAs and the A-site tRNA. The sequence is that of Large ribosomal subunit assembly factor BipA from Buchnera aphidicola subsp. Acyrthosiphon pisum (strain APS) (Acyrthosiphon pisum symbiotic bacterium).